The primary structure comprises 346 residues: Glycerol-1-phosphate dehydrogenase [NAD(P)+] (346 aa).

NAD(+) contacts are provided by residues 93-97 (GSIID) and 115-118 (TTAS). A substrate-binding site is contributed by aspartate 120. Position 124 (serine 124) interacts with NAD(+). Substrate is bound at residue aspartate 167. Positions 167 and 247 each coordinate Zn(2+). Residue histidine 251 participates in substrate binding. Position 263 (histidine 263) interacts with Zn(2+).

It belongs to the glycerol-1-phosphate dehydrogenase family. The cofactor is Zn(2+).

The protein resides in the cytoplasm. It carries out the reaction sn-glycerol 1-phosphate + NAD(+) = dihydroxyacetone phosphate + NADH + H(+). The catalysed reaction is sn-glycerol 1-phosphate + NADP(+) = dihydroxyacetone phosphate + NADPH + H(+). The protein operates within membrane lipid metabolism; glycerophospholipid metabolism. Its function is as follows. Catalyzes the NAD(P)H-dependent reduction of dihydroxyacetonephosphate (DHAP or glycerone phosphate) to glycerol 1-phosphate (G1P). The G1P thus generated is used as the glycerophosphate backbone of phospholipids in the cellular membranes of Archaea. In Pyrococcus abyssi (strain GE5 / Orsay), this protein is Glycerol-1-phosphate dehydrogenase [NAD(P)+].